Reading from the N-terminus, the 283-residue chain is Zinc-finger homeodomain protein 8 (283 aa).

The segment at 23-68 (YKECMRNHAAAMGGQAFDGCGEYMPASPDSLKCAACGCHRSFHRRA) adopts a ZF-HD dimerization-type; degenerate zinc-finger fold. 2 disordered regions span residues 131 to 171 (AGRA…TKFT) and 244 to 283 (GLGT…PISV). The span at 148 to 161 (GSAGGSGSGGGGIF) shows a compositional bias: gly residues. The segment at residues 163–226 (RKRFRTKFTP…NHKNQLASSP (64 aa)) is a DNA-binding region (homeobox). Gly residues predominate over residues 244 to 256 (GLGTGLGTGISGD). A compositionally biased stretch (acidic residues) spans 257–266 (GDGDDDDTDD). Over residues 269 to 283 (PRAAVSSPSPSPISV) the composition is skewed to low complexity.

Homo- and heterodimer with other ZFHD proteins.

It is found in the nucleus. Its function is as follows. Putative transcription factor. This is Zinc-finger homeodomain protein 8 (ZHD8) from Oryza sativa subsp. japonica (Rice).